A 323-amino-acid polypeptide reads, in one-letter code: HPr kinase/phosphorylase (323 aa).

Catalysis depends on residues His142 and Lys163. 157-164 (GESGVGKS) is a binding site for ATP. Ser164 provides a ligand contact to Mg(2+). Asp181 functions as the Proton acceptor; for phosphorylation activity. Proton donor; for dephosphorylation activity in the catalytic mechanism. An important for the catalytic mechanism of both phosphorylation and dephosphorylation region spans residues 205 to 214 (LEVRGLGMLN). Residue Glu206 coordinates Mg(2+). Arg249 is a catalytic residue. Residues 270–275 (PVAAGR) form an important for the catalytic mechanism of dephosphorylation region.

It belongs to the HPrK/P family. In terms of assembly, homohexamer. Requires Mg(2+) as cofactor.

It carries out the reaction [HPr protein]-L-serine + ATP = [HPr protein]-O-phospho-L-serine + ADP + H(+). The enzyme catalyses [HPr protein]-O-phospho-L-serine + phosphate + H(+) = [HPr protein]-L-serine + diphosphate. Its function is as follows. Catalyzes the ATP- as well as the pyrophosphate-dependent phosphorylation of a specific serine residue in HPr, a phosphocarrier protein of the phosphoenolpyruvate-dependent sugar phosphotransferase system (PTS). HprK/P also catalyzes the pyrophosphate-producing, inorganic phosphate-dependent dephosphorylation (phosphorolysis) of seryl-phosphorylated HPr (P-Ser-HPr). The polypeptide is HPr kinase/phosphorylase (Nitrosomonas europaea (strain ATCC 19718 / CIP 103999 / KCTC 2705 / NBRC 14298)).